The following is a 31-amino-acid chain: Cyclotide vpub-B (31 aa).

A cross-link (cyclopeptide (Gly-Asn)) is located at residues 1-31 (GIIPCGESCVFIPCITSVVGCSCKSKVCYKN). 3 disulfide bridges follow: Cys-5–Cys-21, Cys-9–Cys-23, and Cys-14–Cys-28.

The protein belongs to the cyclotide family. Bracelet subfamily. Post-translationally, this is a cyclic peptide.

Functionally, probably participates in a plant defense mechanism. In Viola pubescens (Downy yellow violet), this protein is Cyclotide vpub-B.